The sequence spans 91 residues: Acylphosphatase (91 aa).

One can recognise an Acylphosphatase-like domain in the interval 5-91 (RLHAIVEGEV…KGEFTSFDTY (87 aa)). Residues R20 and N38 contribute to the active site.

It belongs to the acylphosphatase family.

It catalyses the reaction an acyl phosphate + H2O = a carboxylate + phosphate + H(+). The sequence is that of Acylphosphatase (acyP) from Metallosphaera sedula (strain ATCC 51363 / DSM 5348 / JCM 9185 / NBRC 15509 / TH2).